The chain runs to 593 residues: NADH-quinone oxidoreductase subunit C/D (593 aa).

The tract at residues 1-184 (MTADNAIFIP…DPYSLTLAKQ (184 aa)) is NADH dehydrogenase I subunit C. The interval 208–593 (DYMFLNLGPN…IDFVMADVDR (386 aa)) is NADH dehydrogenase I subunit D.

In the N-terminal section; belongs to the complex I 30 kDa subunit family. The protein in the C-terminal section; belongs to the complex I 49 kDa subunit family. In terms of assembly, NDH-1 is composed of 13 different subunits. Subunits NuoB, CD, E, F, and G constitute the peripheral sector of the complex.

It is found in the cell inner membrane. It carries out the reaction a quinone + NADH + 5 H(+)(in) = a quinol + NAD(+) + 4 H(+)(out). Functionally, NDH-1 shuttles electrons from NADH, via FMN and iron-sulfur (Fe-S) centers, to quinones in the respiratory chain. The immediate electron acceptor for the enzyme in this species is believed to be ubiquinone. Couples the redox reaction to proton translocation (for every two electrons transferred, four hydrogen ions are translocated across the cytoplasmic membrane), and thus conserves the redox energy in a proton gradient. The protein is NADH-quinone oxidoreductase subunit C/D of Pseudomonas putida (strain W619).